A 404-amino-acid polypeptide reads, in one-letter code: Subtilisin-like protease 3 (404 aa).

The first 20 residues, 1-20 (MLFSKSLVALVACFLPLIVS), serve as a signal peptide directing secretion. Positions 21 to 114 (ATELKLRNAA…VDKDVKVSAY (94 aa)) are excised as a propeptide. An Inhibitor I9 domain is found at 38 to 112 (SYIVVYKDID…AYVDKDVKVS (75 aa)). The Peptidase S8 domain maps to 123-404 (PWGLDRISHR…DNLAYNDDGY (282 aa)). N-linked (GlcNAc...) asparagine glycosylation occurs at Asn133. Residues Asp158 and His190 each act as charge relay system in the active site. Asn243, Asn251, Asn286, Asn307, and Asn340 each carry an N-linked (GlcNAc...) asparagine glycan. Ser347 acts as the Charge relay system in catalysis. Residue Asn366 is glycosylated (N-linked (GlcNAc...) asparagine).

It belongs to the peptidase S8 family.

The protein resides in the secreted. Its function is as follows. Secreted subtilisin-like serine endopeptidase. Mediates the degradation of collagen, the major structural protein in the mammalian host. Degrades the nonhelical regions of collagen that function in the cross-linking of the helical components. May function as virulence factor involved in epidermal wing necrosis observed in white nose syndrome (WNS) in bats. This is Subtilisin-like protease 3 from Pseudogymnoascus destructans (strain ATCC MYA-4855 / 20631-21) (Bat white-nose syndrome fungus).